Consider the following 893-residue polypeptide: DNA mismatch repair protein MutS (893 aa).

Positions 1-17 (MESTMSSASTNASPPSA) are enriched in low complexity. Residues 1 to 22 (MESTMSSASTNASPPSASEKHT) are disordered. 641–648 (GPNMGGKS) contacts ATP.

Belongs to the DNA mismatch repair MutS family.

This protein is involved in the repair of mismatches in DNA. It is possible that it carries out the mismatch recognition step. This protein has a weak ATPase activity. The polypeptide is DNA mismatch repair protein MutS (Herminiimonas arsenicoxydans).